The primary structure comprises 105 residues: Protein AlbB (105 aa).

Its function is as follows. Involved in the biosynthesis of albonoursin (cyclo[(alpha,beta-dehydro-Phe)-(alpha,beta-dehydro-Leu)]), an antibacterial peptide. AlbB is essential for cyclic dipeptide oxidase AlbA (CDO) activity. This Streptomyces noursei (Streptomyces albulus) protein is Protein AlbB (albB).